The following is a 223-amino-acid chain: Deoxyribose-phosphate aldolase (223 aa).

Residue Asp91 is the Proton donor/acceptor of the active site. Catalysis depends on Lys154, which acts as the Schiff-base intermediate with acetaldehyde. Lys183 functions as the Proton donor/acceptor in the catalytic mechanism.

It belongs to the DeoC/FbaB aldolase family. DeoC type 1 subfamily.

It localises to the cytoplasm. It carries out the reaction 2-deoxy-D-ribose 5-phosphate = D-glyceraldehyde 3-phosphate + acetaldehyde. It functions in the pathway carbohydrate degradation; 2-deoxy-D-ribose 1-phosphate degradation; D-glyceraldehyde 3-phosphate and acetaldehyde from 2-deoxy-alpha-D-ribose 1-phosphate: step 2/2. Its function is as follows. Catalyzes a reversible aldol reaction between acetaldehyde and D-glyceraldehyde 3-phosphate to generate 2-deoxy-D-ribose 5-phosphate. The protein is Deoxyribose-phosphate aldolase of Geobacillus kaustophilus (strain HTA426).